Reading from the N-terminus, the 72-residue chain is Conotoxin VnMKLT2-021 (72 aa).

Positions 1–22 (MKLTCVLIVAVLFLTACQLTTA) are cleaved as a signal peptide. Residues 23–45 (ASYARSEREHPDLGSSDQNSKLT) constitute a propeptide that is removed on maturation. Residues 25-44 (YARSEREHPDLGSSDQNSKL) are disordered. Intrachain disulfides connect cysteine 48/cysteine 62, cysteine 55/cysteine 66, and cysteine 61/cysteine 71.

It belongs to the conotoxin O1 superfamily. Expressed by the venom duct.

Its subcellular location is the secreted. This Conus ventricosus (Mediterranean cone) protein is Conotoxin VnMKLT2-021.